We begin with the raw amino-acid sequence, 223 residues long: Coiled-coil domain-containing protein 70 (223 aa).

A coiled-coil region spans residues 129–153 (NALWERDRNLLQEDKALWEEEKALW). The disordered stretch occupies residues 199-223 (EQRHQNGPYNANEEPQSTSFPRGRA). Over residues 203 to 223 (QNGPYNANEEPQSTSFPRGRA) the composition is skewed to polar residues.

The chain is Coiled-coil domain-containing protein 70 from Mus musculus (Mouse).